The chain runs to 217 residues: Grancalcin (217 aa).

EF-hand domains are found at residues 48–83, 89–122, 119–154, and 155–180; these read SSAG…SGIN, FSLE…AALN, AALN…MGYR, and LSPQ…DYVA. Ca(2+) is bound by residues Asp65, Asp69, and Glu71. Asp132, Asp134, Ser136, Thr138, and Glu143 together coordinate Ca(2+).

As to quaternary structure, homodimer. Interacts with SRI and LCP1. In terms of tissue distribution, detected in neutrophils and macrophages (at protein level). Highly expressed in bone marrow.

The protein localises to the cytoplasm. Its subcellular location is the cytoplasmic granule membrane. Calcium-binding protein that may play a role in the adhesion of neutrophils to fibronectin. May play a role in the formation of focal adhesions. This is Grancalcin (GCA) from Homo sapiens (Human).